The sequence spans 701 residues: CRS2-associated factor 1, chloroplastic (701 aa).

The N-terminal 77 residues, 1 to 77, are a transit peptide targeting the chloroplast; sequence MATSHLTSRS…ENGEPAAGVR (77 aa). CRM domains are found at residues 183 to 279 and 301 to 397; these read EPLT…TRPI and DGLT…LPPL. Positions 581–603 are CRS2 binding; that stretch reads GILLLFKQAIDSGMALVLNENEF.

In terms of assembly, interacts with CRS2 and RNA. Part of large ribonucleo-protein complexes that include group IIB introns, CRS2 and CAF1.

The protein localises to the plastid. It is found in the chloroplast stroma. Functionally, required for the splicing of group IIB introns in chloroplasts. Forms splicing particles with CRS2. Interacts with RNA and confers intron specificity of the splicing particles. The chain is CRS2-associated factor 1, chloroplastic from Oryza sativa subsp. japonica (Rice).